Here is a 226-residue protein sequence, read N- to C-terminus: Protein AhpA (226 aa).

2 consecutive transmembrane segments (helical) span residues 12-32 (SMIS…LFGV) and 169-189 (GELI…HYFL).

Belongs to the Smp family.

It localises to the cell inner membrane. When anaerobically expressed in wild-type E.coli K12 confers a hemolytic phenotype, but not in an sheA mutant. Suggests it affects the expression of the latent E.coli K12 hemolysin sheA under anaerobic conditions. This chain is Protein AhpA (ahpA), found in Pasteurella multocida (strain Pm70).